Consider the following 226-residue polypeptide: tRNA (guanine-N(7)-)-methyltransferase (226 aa).

Residues 1-21 (MTHPQQPHGPLRSFGRLKSRP) are disordered. S-adenosyl-L-methionine is bound by residues Glu-59, Glu-84, Asp-111, and Asp-133. Residue Asp-133 is part of the active site. Residue Lys-137 participates in substrate binding. An interaction with RNA region spans residues 139–144 (RHNKRR). Substrate-binding positions include Asp-169 and 206–209 (TRYE).

This sequence belongs to the class I-like SAM-binding methyltransferase superfamily. TrmB family.

The catalysed reaction is guanosine(46) in tRNA + S-adenosyl-L-methionine = N(7)-methylguanosine(46) in tRNA + S-adenosyl-L-homocysteine. The protein operates within tRNA modification; N(7)-methylguanine-tRNA biosynthesis. Its function is as follows. Catalyzes the formation of N(7)-methylguanine at position 46 (m7G46) in tRNA. The sequence is that of tRNA (guanine-N(7)-)-methyltransferase from Caulobacter sp. (strain K31).